Consider the following 839-residue polypeptide: Flocculation protein FLO11 (839 aa).

The N-terminal stretch at 1–22 (MVSLRSIFTSSILAAGLTRAHG) is a signal peptide. Residues 24 to 194 (SGKTCPTSEV…PKKCSSDCGV (171 aa)) form the Flo11 1 domain. Cystine bridges form between Cys-28–Cys-188, Cys-37–Cys-167, Cys-129–Cys-192, and Cys-143–Cys-152. Asn-79 carries an N-linked (GlcNAc...) asparagine glycan. The interval 187 to 342 (KCSSDCGVEP…GPTCPTSEVS (156 aa)) is disordered. The span at 198 to 317 (TSDEPEEPTT…EPTTSEEPEE (120 aa)) shows a compositional bias: acidic residues. The Flo11 2 domain maps to 332 to 502 (EGPTCPTSEV…PKKCSSNCGV (171 aa)). N-linked (GlcNAc...) asparagine glycosylation is present at Asn-387. The disordered stretch occupies residues 496–606 (CSSNCGVEPT…LVPTTKTETD (111 aa)). A compositionally biased stretch (acidic residues) spans 506-592 (TSDEPEEPTT…PTTSDEEPGT (87 aa)). Over residues 593–606 (TEEPLVPTTKTETD) the composition is skewed to low complexity.

The protein belongs to the flocculin family. Highly divergent.

Its function is as follows. Homophilic binding protein that enables kin discrimination in heterogeneous yeast populations by mediating homotypic cell-cell interactions during flocculation, a reversible and asexual process in which cells adhere to form aggregates (flocs). This chain is Flocculation protein FLO11, found in Komagataella phaffii (strain GS115 / ATCC 20864) (Yeast).